The primary structure comprises 32 residues: C-reactive protein (32 aa).

One can recognise a Pentraxin (PTX) domain in the interval 2–32 (VIKTLVFQSESNNSFVELIPMKPLNLRAFXL).

This sequence belongs to the pentraxin family. As to quaternary structure, homopentamer. Pentraxin (or pentaxin) have a discoid arrangement of 5 non-covalently bound subunits. Post-translationally, glycosylated.

The protein resides in the secreted. In terms of biological role, displays several functions associated with host defense: it promotes agglutination, bacterial capsular swelling, phagocytosis, and complement fixation through its calcium-dependent binding to phosphorylcholine. In Pleuronectes platessa (European plaice), this protein is C-reactive protein.